The sequence spans 338 residues: E3 ubiquitin-protein ligase SPL1 (338 aa).

The chain crosses the membrane as a helical span at residues 1–21; the sequence is MIHLAGFTCCLGGVALYLLTR. The Chloroplast intermembrane segment spans residues 22 to 223; it reads STGRDIKSIT…KLGDLSRRFK (202 aa). Residues 224–246 form a helical membrane-spanning segment; that stretch reads YASMGLTVLGVILISKPVIEYIL. At 247–338 the chain is on the cytoplasmic side; it reads KRIEDTLERR…IQQVLKIYRH (92 aa). Residues 291–326 form an RING-type zinc finger; that stretch reads CVVCLDQKYNTAFVECGHMCCCTPCSLQLRTCPLCR.

It is found in the plastid. The protein localises to the chloroplast outer membrane. It carries out the reaction S-ubiquitinyl-[E2 ubiquitin-conjugating enzyme]-L-cysteine + [acceptor protein]-L-lysine = [E2 ubiquitin-conjugating enzyme]-L-cysteine + N(6)-ubiquitinyl-[acceptor protein]-L-lysine.. It functions in the pathway protein modification; protein ubiquitination. In terms of biological role, possesses E3 ubiquitin-protein ligase activity. This chain is E3 ubiquitin-protein ligase SPL1, found in Arabidopsis thaliana (Mouse-ear cress).